A 520-amino-acid polypeptide reads, in one-letter code: Putative hydrolase Mb2247c (520 aa).

Positions Met-1–Ala-34 are cleaved as a signal peptide. The chain crosses the membrane as a helical span at residues Phe-104–Ala-124. The AB hydrolase-1 domain maps to Gly-105–Trp-403. Residue Ser-232 is the Nucleophile of the active site. The active site involves Asp-461. His-488 functions as the Proton donor in the catalytic mechanism.

It belongs to the peptidase S33 family.

It localises to the cell membrane. The chain is Putative hydrolase Mb2247c from Mycobacterium bovis (strain ATCC BAA-935 / AF2122/97).